A 240-amino-acid chain; its full sequence is UDP-2,3-diacylglucosamine hydrolase (240 aa).

Mn(2+) is bound by residues Asp8, His10, Asp41, Asn79, and His114. Position 79-80 (79-80) interacts with substrate; the sequence is NR. Residues Asp122, Ser160, Asn164, Lys167, and His195 each coordinate substrate. Positions 195 and 197 each coordinate Mn(2+).

It belongs to the LpxH family. The cofactor is Mn(2+).

It is found in the cell inner membrane. It localises to the cytoplasm. It carries out the reaction UDP-2-N,3-O-bis[(3R)-3-hydroxytetradecanoyl]-alpha-D-glucosamine + H2O = 2-N,3-O-bis[(3R)-3-hydroxytetradecanoyl]-alpha-D-glucosaminyl 1-phosphate + UMP + 2 H(+). Its pathway is glycolipid biosynthesis; lipid IV(A) biosynthesis; lipid IV(A) from (3R)-3-hydroxytetradecanoyl-[acyl-carrier-protein] and UDP-N-acetyl-alpha-D-glucosamine: step 4/6. With respect to regulation, inhibited by a sulfonyl piperazine compound that shows antibacterial activity against E.coli; LpxH is the cellular target of this compound. Inhibited by 0.01% (or more) Triton X-100 in vitro. Its function is as follows. Hydrolyzes the pyrophosphate bond of UDP-2,3-diacylglucosamine to yield 2,3-diacylglucosamine 1-phosphate (lipid X) and UMP by catalyzing the attack of water at the alpha-P atom. Involved in the biosynthesis of lipid A, a phosphorylated glycolipid that anchors the lipopolysaccharide to the outer membrane of the cell. Is essential for E.coli growth. Does not cleave the unacylated UDP-GlcNAc, the mono-acylated UDP-3-O-(R)-3-hydroxymyristoyl-GlcNAc, and CDP-diacylglycerol. In Escherichia coli (strain K12), this protein is UDP-2,3-diacylglucosamine hydrolase.